The chain runs to 321 residues: Glutaminase (321 aa).

7 residues coordinate substrate: serine 69, asparagine 120, glutamate 165, asparagine 172, tyrosine 196, tyrosine 248, and valine 266.

This sequence belongs to the glutaminase family. In terms of assembly, homotetramer.

The catalysed reaction is L-glutamine + H2O = L-glutamate + NH4(+). The protein is Glutaminase of Bacteroides fragilis (strain YCH46).